We begin with the raw amino-acid sequence, 338 residues long: Flap endonuclease 1 (338 aa).

Positions 1 to 98 (MGTDIGDLLQ…ETLSRRKEVR (98 aa)) are N-domain. Mg(2+) contacts are provided by aspartate 27, aspartate 80, glutamate 152, glutamate 154, aspartate 173, aspartate 175, and aspartate 236. Residues 116-257 (AAYKYAQASS…TALKLIKKHG (142 aa)) form an I-domain region. The interaction with PCNA stretch occupies residues 330-338 (RQKTLDQWF).

This sequence belongs to the XPG/RAD2 endonuclease family. FEN1 subfamily. Interacts with PCNA. PCNA stimulates the nuclease activity without altering cleavage specificity. The cofactor is Mg(2+).

In terms of biological role, structure-specific nuclease with 5'-flap endonuclease and 5'-3' exonuclease activities involved in DNA replication and repair. During DNA replication, cleaves the 5'-overhanging flap structure that is generated by displacement synthesis when DNA polymerase encounters the 5'-end of a downstream Okazaki fragment. Binds the unpaired 3'-DNA end and kinks the DNA to facilitate 5' cleavage specificity. Cleaves one nucleotide into the double-stranded DNA from the junction in flap DNA, leaving a nick for ligation. Also involved in the base excision repair (BER) pathway. Acts as a genome stabilization factor that prevents flaps from equilibrating into structures that lead to duplications and deletions. Also possesses 5'-3' exonuclease activity on nicked or gapped double-stranded DNA. The chain is Flap endonuclease 1 from Methanosarcina acetivorans (strain ATCC 35395 / DSM 2834 / JCM 12185 / C2A).